We begin with the raw amino-acid sequence, 96 residues long: uncharacterized protein (96 aa).

Residues 38-91 form the HTH cro/C1-type domain; it reads IEQLRKGTGLKIDDFARVLGVSVAMVKEWESRRVKPSSAELKLMRLIQANPALS. Positions 49–68 form a DNA-binding region, H-T-H motif; it reads IDDFARVLGVSVAMVKEWES.

This is an uncharacterized protein from Escherichia coli O157:H7.